We begin with the raw amino-acid sequence, 197 residues long: Ion-translocating oxidoreductase complex subunit B (197 aa).

The segment at 1–26 (MSTILIAIIALAVLAAVFGAILGFAS) is hydrophobic. A 4Fe-4S domain is found at 32–90 (EADPIVDQIDTILPQTQCGQCGYPGCRPYAEAIANGDKINKCPPGGQATIEKLADLMGV). Residues cysteine 49, cysteine 52, cysteine 57, cysteine 73, cysteine 114, cysteine 117, cysteine 120, cysteine 124, cysteine 144, cysteine 147, cysteine 150, and cysteine 154 each coordinate [4Fe-4S] cluster. 4Fe-4S ferredoxin-type domains lie at 105-134 (TVAF…GGTK) and 135-164 (ALHT…MIPV).

Belongs to the 4Fe4S bacterial-type ferredoxin family. RnfB subfamily. The complex is composed of six subunits: RnfA, RnfB, RnfC, RnfD, RnfE and RnfG. [4Fe-4S] cluster serves as cofactor.

It is found in the cell inner membrane. Part of a membrane-bound complex that couples electron transfer with translocation of ions across the membrane. This chain is Ion-translocating oxidoreductase complex subunit B, found in Vibrio atlanticus (strain LGP32) (Vibrio splendidus (strain Mel32)).